Reading from the N-terminus, the 134-residue chain is Small ribosomal subunit protein uS12 (134 aa).

Aspartate 89 is modified (3-methylthioaspartic acid). Residues 101 to 134 are disordered; sequence TLDASGVNGRNQSRSKYGTKRPKPGQAAAGGKKK. A compositionally biased stretch (low complexity) spans 125–134; the sequence is GQAAAGGKKK.

It belongs to the universal ribosomal protein uS12 family. As to quaternary structure, part of the 30S ribosomal subunit. Contacts proteins S8 and S17. May interact with IF1 in the 30S initiation complex.

Its function is as follows. With S4 and S5 plays an important role in translational accuracy. Interacts with and stabilizes bases of the 16S rRNA that are involved in tRNA selection in the A site and with the mRNA backbone. Located at the interface of the 30S and 50S subunits, it traverses the body of the 30S subunit contacting proteins on the other side and probably holding the rRNA structure together. The combined cluster of proteins S8, S12 and S17 appears to hold together the shoulder and platform of the 30S subunit. In Gemmatimonas aurantiaca (strain DSM 14586 / JCM 11422 / NBRC 100505 / T-27), this protein is Small ribosomal subunit protein uS12.